A 422-amino-acid polypeptide reads, in one-letter code: Cotranscriptional regulator ARB2A homolog (422 aa).

A signal peptide spans 1–19 (MKLEIKCFIICKVLPLVWL). Positions 213-253 (KSKVPADQPSPDSSDEPAEKRERRERNPKETKKRRDFYEKY) are disordered. A compositionally biased stretch (basic and acidic residues) spans 229 to 242 (PAEKRERRERNPKE). Catalysis depends on Ser-299, which acts as the Nucleophile. Residues 403 to 422 (NTKTKPTPTRRSNRIKHEDL) form a disordered region.

It belongs to the ARB2A family.

It localises to the nucleus. Its subcellular location is the cytoplasm. Functionally, may play role in the regulation of alternative splicing. May have hydrolase activity. In Xenopus tropicalis (Western clawed frog), this protein is Cotranscriptional regulator ARB2A homolog (arb2a).